Reading from the N-terminus, the 307-residue chain is 1-aminocyclopropane-1-carboxylate oxidase 5 (307 aa).

Residues 106 to 134 (SNIKETMGEYREEVRKLASKMMEVMDENL) adopt a coiled-coil conformation. A Fe2OG dioxygenase domain is found at 152 to 256 (GEETAFFGTK…RRSIASFYNP (105 aa)). Fe cation-binding residues include histidine 180, aspartate 182, and histidine 237. Arginine 247 serves as a coordination point for 2-oxoglutarate.

It belongs to the iron/ascorbate-dependent oxidoreductase family. Requires Fe(2+) as cofactor.

The enzyme catalyses 1-aminocyclopropane-1-carboxylate + L-ascorbate + O2 = ethene + L-dehydroascorbate + hydrogen cyanide + CO2 + 2 H2O. The protein operates within alkene biosynthesis; ethylene biosynthesis via S-adenosyl-L-methionine; ethylene from S-adenosyl-L-methionine: step 2/2. Enzyme involved in the ethylene biosynthesis. The protein is 1-aminocyclopropane-1-carboxylate oxidase 5 of Arabidopsis thaliana (Mouse-ear cress).